The primary structure comprises 403 residues: Lipid droplet-regulating VLDL assembly factor AUP1 (403 aa).

The Cytoplasmic segment spans residues Met1 to Ser21. An intramembrane segment occupies Leu22–Ile42. Residues Gly43–Lys399 are Cytoplasmic-facing. The region spanning Thr286–Val328 is the CUE domain.

Belongs to the AUP1 family.

The protein localises to the endoplasmic reticulum membrane. It is found in the lipid droplet. Functionally, plays a role in the translocation of terminally misfolded proteins from the endoplasmic reticulum lumen to the cytoplasm and their degradation by the proteasome. Plays a role in lipid droplet formation. Induces lipid droplet clustering. The polypeptide is Lipid droplet-regulating VLDL assembly factor AUP1 (Xenopus tropicalis (Western clawed frog)).